Here is a 569-residue protein sequence, read N- to C-terminus: Alpha-amylase (569 aa).

The N-terminal stretch at 1 to 28 is a signal peptide; it reads MARKTVAAALALVAGAAVAVTGNAPAQA. 3 residues coordinate Ca(2+): asparagine 120, glutamine 166, and aspartate 175. Aspartate 205 functions as the Nucleophile in the catalytic mechanism. Residue histidine 209 coordinates Ca(2+). Glutamate 232 (proton donor) is an active-site residue. The 102-residue stretch at 468–569 folds into the CBM20 domain; the sequence is TTPPATSGAS…QLVLNDTFRS (102 aa).

It belongs to the glycosyl hydrolase 13 family. Monomer. It depends on Ca(2+) as a cofactor.

It carries out the reaction Endohydrolysis of (1-&gt;4)-alpha-D-glucosidic linkages in polysaccharides containing three or more (1-&gt;4)-alpha-linked D-glucose units.. In Streptomyces violaceus (Streptomyces venezuelae), this protein is Alpha-amylase (aml).